Reading from the N-terminus, the 53-residue chain is U1-poneritoxin-Dq5a (53 aa).

The first 23 residues, 1 to 23 (MNIRLMFTLIALLVLTVSFSGAN), serve as a signal peptide directing secretion. Disulfide bonds link Cys-25/Cys-42, Cys-32/Cys-47, and Cys-41/Cys-52.

Expressed by the venom gland.

It is found in the secreted. May have neurotoxic activity. This chain is U1-poneritoxin-Dq5a, found in Dinoponera quadriceps (South American ant).